Here is an 812-residue protein sequence, read N- to C-terminus: 5-methyltetrahydropteroyltriglutamate--homocysteine methyltransferase 3, chloroplastic (812 aa).

The N-terminal 33 residues, 1 to 33 (MGQLALQRLQPLASLPRRPPSLPPPSSATPSLP), are a transit peptide targeting the chloroplast. A disordered region spans residues 13–33 (ASLPRRPPSLPPPSSATPSLP). Pro residues predominate over residues 17-27 (RRPPSLPPPSS). 5-methyltetrahydropteroyltri-L-glutamate-binding residues include K66 and N164. The disordered stretch occupies residues 430-456 (MRQASRRSSPRVTNAAVQQDVDAVKKS). Residues 485–487 (IGS) and E538 contribute to the L-homocysteine site. L-methionine-binding positions include 485 to 487 (IGS) and E538. Residues D543, Y566, 569 to 570 (RC), and W615 each bind 5-methyltetrahydropteroyltri-L-glutamate. D653 is a binding site for L-homocysteine. Residue D653 coordinates L-methionine. Positions 695, 697, 706, 710, and 719 each coordinate Zn(2+). H749 acts as the Proton donor in catalysis. Residue C781 coordinates Zn(2+).

The protein belongs to the vitamin-B12 independent methionine synthase family. It depends on Zn(2+) as a cofactor. Expressed in seeds.

Its subcellular location is the plastid. It localises to the chloroplast. It carries out the reaction 5-methyltetrahydropteroyltri-L-glutamate + L-homocysteine = tetrahydropteroyltri-L-glutamate + L-methionine. Its pathway is amino-acid biosynthesis; L-methionine biosynthesis via de novo pathway; L-methionine from L-homocysteine (MetE route): step 1/1. In terms of biological role, catalyzes the transfer of a methyl group from 5-methyltetrahydrofolate to homocysteine resulting in methionine formation. This chain is 5-methyltetrahydropteroyltriglutamate--homocysteine methyltransferase 3, chloroplastic (MS3), found in Arabidopsis thaliana (Mouse-ear cress).